Consider the following 63-residue polypeptide: Toxin Tx7335 (63 aa).

Disulfide bonds link Cys3-Cys24, Cys17-Cys39, Cys25-Cys55, and Cys56-Cys61.

Contains 4 disulfide bonds. In terms of tissue distribution, expressed by the venom gland.

The protein resides in the secreted. Activates bacterial pH-gated potassium channel KcsA by binding to its extracellular domain, probably at a site different from channel inhibitors. Increases both mean open time and open probability of KscA. This chain is Toxin Tx7335, found in Dendroaspis angusticeps (Eastern green mamba).